The sequence spans 501 residues: Calcium-dependent protein kinase 4 (501 aa).

In terms of domain architecture, Protein kinase spans 25 to 283; it reads YLLGKKLGQG…AHEALCHPWI (259 aa). ATP contacts are provided by residues 31-39 and Lys-54; that span reads LGQGQFGTT. Asp-149 serves as the catalytic Proton acceptor. Phosphoserine is present on Ser-189. The interval 289 to 319 is autoinhibitory domain; that stretch reads APDKPLDPAVLSRLKQFSQMNKIKKMALRVI. 4 consecutive EF-hand domains span residues 326–361, 362–397, 398–433, and 437–467; these read EEIG…VGSE, LMES…INKM, EREE…FGLC, and LDDM…GDGV. Residues Asp-339, Asp-341, Ser-343, Thr-345, Glu-350, Asp-375, Asp-377, Ser-379, Thr-381, Glu-386, Asp-411, Asp-413, Ser-415, Tyr-417, Glu-422, Asp-445, Asp-447, Asp-449, Lys-451, and Glu-456 each contribute to the Ca(2+) site.

The protein belongs to the protein kinase superfamily. Ser/Thr protein kinase family. CDPK subfamily. Interacts with Di19.

The protein localises to the cytoplasm. It is found in the nucleus. It carries out the reaction L-seryl-[protein] + ATP = O-phospho-L-seryl-[protein] + ADP + H(+). The catalysed reaction is L-threonyl-[protein] + ATP = O-phospho-L-threonyl-[protein] + ADP + H(+). Activated by calcium. Autophosphorylation may play an important role in the regulation of the kinase activity. Its function is as follows. May play a role in signal transduction pathways that involve calcium as a second messenger. Functions as a regulator of the calcium-mediated abscisic acid (ABA) signaling pathway. Phosphorylates ABA-responsive transcription factors ABF1 and ABF4 in vitro. Phosphorylates the nuclear zinc finger Di19 in vitro. The protein is Calcium-dependent protein kinase 4 (CPK4) of Arabidopsis thaliana (Mouse-ear cress).